The sequence spans 335 residues: E3 ubiquitin ligase rnf-121 (335 aa).

At 1 to 47 (MGQHGAIRLQNEVQEGMPPPHELTEEEQWAEEHRKMHEKHKGHEAMH) the chain is on the cytoplasmic side. Residues 48–68 (MEMMVIFMISVIVGQIFLVTW) traverse the membrane as a helical segment. Topologically, residues 69 to 72 (KRKH) are lumenal. The helical transmembrane segment at 73–93 (FKSYQMCTLIGMLTIPVYVCF) threads the bilayer. Over 94-99 (NRSWYR) the chain is Cytoplasmic. A helical transmembrane segment spans residues 100–120 (FLATWLVFCIFSAFIWLKASA). Over 121–143 (QHISGGTPRFVYKWFLFLHKLSY) the chain is Lumenal. The helical transmembrane segment at 144–164 (VLGVVGYLIMMGALLGFHVLF) threads the bilayer. At 165–168 (GVSQ) the chain is on the cytoplasmic side. A helical membrane pass occupies residues 169-189 (PTLMDAGILFMFYGVYYGVLG). Over 190-335 (RDFAHICTAR…QGLTTWMGLE (146 aa)) the chain is Lumenal. Residues 222 to 284 (CAVCGGRLDD…GKLQTCPYCK (63 aa)) form an RING-type; atypical zinc finger.

Belongs to the RNF121 family. Expressed in body wall muscles, the hypodermis, seam cells, vulval cells, spermathecal cells, uterine cells and the distal tip cell (at protein level).

The protein resides in the endoplasmic reticulum membrane. Its subcellular location is the golgi apparatus membrane. The catalysed reaction is S-ubiquitinyl-[E2 ubiquitin-conjugating enzyme]-L-cysteine + [acceptor protein]-L-lysine = [E2 ubiquitin-conjugating enzyme]-L-cysteine + N(6)-ubiquitinyl-[acceptor protein]-L-lysine.. The protein operates within protein modification; protein ubiquitination. In terms of biological role, E3 ubiquitin ligase which accepts ubiquitin and transfers it to substrates such as the beta-integrin subunit pat-3, promoting their degradation by the endoplasmic reticulum-associated degradation (ERAD) pathway which is a pathway involved in ubiquitin-dependent degradation of misfolded endoplasmic reticulum proteins. Negatively regulates the unfolded protein response to reduce endoplasmic reticulum stress. Required for the cessation of distal tip cell migration at the end of larval morphogenesis. Plays a role in germline and gonad development. The protein is E3 ubiquitin ligase rnf-121 of Caenorhabditis elegans.